The following is a 303-amino-acid chain: Proteasome subunit beta (303 aa).

A propeptide spans 1 to 64 (MTWPDRDTSA…VTPSDAVPHG (64 aa)) (removed in mature form; by autocatalysis). The Nucleophile role is filled by Thr65.

Belongs to the peptidase T1B family. As to quaternary structure, the 20S proteasome core is composed of 14 alpha and 14 beta subunits that assemble into four stacked heptameric rings, resulting in a barrel-shaped structure. The two inner rings, each composed of seven catalytic beta subunits, are sandwiched by two outer rings, each composed of seven alpha subunits. The catalytic chamber with the active sites is on the inside of the barrel. Has a gated structure, the ends of the cylinder being occluded by the N-termini of the alpha-subunits. Is capped by the proteasome-associated ATPase, ARC.

Its subcellular location is the cytoplasm. The enzyme catalyses Cleavage of peptide bonds with very broad specificity.. It participates in protein degradation; proteasomal Pup-dependent pathway. With respect to regulation, the formation of the proteasomal ATPase ARC-20S proteasome complex, likely via the docking of the C-termini of ARC into the intersubunit pockets in the alpha-rings, may trigger opening of the gate for substrate entry. Interconversion between the open-gate and close-gate conformations leads to a dynamic regulation of the 20S proteasome proteolysis activity. In terms of biological role, component of the proteasome core, a large protease complex with broad specificity involved in protein degradation. This Mycolicibacterium gilvum (strain PYR-GCK) (Mycobacterium gilvum (strain PYR-GCK)) protein is Proteasome subunit beta.